Reading from the N-terminus, the 706-residue chain is K(+)-insensitive pyrophosphate-energized proton pump (706 aa).

5 helical membrane passes run 1 to 21, 62 to 82, 83 to 103, 129 to 149, and 164 to 184; these read MTALWVIVLCGALSIVYAIWA, VVIFALLAYFLGILVAIGFAI, GAILSGAAGFIGMNVSVRANV, LLVAGLALLGVTLYFIYLIHF, and VALGFGASLISIFARLGGGIF. Lys186 provides a ligand contact to substrate. Mg(2+)-binding residues include Asp189, Asp193, Asn216, and Asp219. The next 6 helical transmembrane spans lie at 231 to 251, 263 to 283, 300 to 320, 330 to 350, 393 to 413, and 414 to 434; these read LFETYAVTAVATMVLAAIFFG, TLPLAIGGICILTSIAGTFFV, IATGVLSLVGVGVVIHQLIGF, GLALFECGIVGLAVTGLIIWI, IVIIAGILITYSLAGLFGIAI, and ATTTMLALAGMIVALDAFGPV. Mg(2+) is bound at residue Asp436. Transmembrane regions (helical) follow at residues 467–487, 516–536, 585–605, and 616–636; these read AVTKGYAIGSAGLGALVLFAA, YVVVGLLFGGLLPYLFGAMGM, IIPSLLPVLSPIFVYFAIYAI, and AFSAVGAMLLGVIVTGLFVAI. Residues Asp646, Asp672, and Asp676 each contribute to the Ca(2+) site. Lys679 serves as a coordination point for substrate. The helical transmembrane segment at 685-705 threads the bilayer; the sequence is AVNPMIKITNIVALLLLAILA.

It belongs to the H(+)-translocating pyrophosphatase (TC 3.A.10) family. K(+)-insensitive subfamily. As to quaternary structure, homodimer. It depends on Mg(2+) as a cofactor.

It localises to the cell inner membrane. It carries out the reaction diphosphate + H2O + H(+)(in) = 2 phosphate + 2 H(+)(out). In terms of biological role, proton pump that utilizes the energy of pyrophosphate hydrolysis as the driving force for proton movement across the membrane. Generates a proton motive force. The polypeptide is K(+)-insensitive pyrophosphate-energized proton pump (Rhodopseudomonas palustris (strain ATCC BAA-98 / CGA009)).